A 160-amino-acid chain; its full sequence is Non-secretory ribonuclease (160 aa).

The first 27 residues, 1–27, serve as a signal peptide directing secretion; it reads MVPKLFTSQICLLLLLGLMGVEGSLHA. Trp34 carries a C-linked (Man) tryptophan glycan. The active-site Proton acceptor is the His42. Residue Asn44 is glycosylated (N-linked (GlcNAc...) asparagine). 4 cysteine pairs are disulfide-bonded: Cys50–Cys110, Cys64–Cys122, Cys82–Cys137, and Cys89–Cys98. A 3'-nitrotyrosine modification is found at Tyr60. 65–69 is a substrate binding site; the sequence is KNQNT. N-linked (GlcNAc...) asparagine glycans are attached at residues Asn92, Asn111, and Asn138. His155 serves as the catalytic Proton donor.

The protein belongs to the pancreatic ribonuclease family. In terms of assembly, interacts with and forms a tight 1:1 complex with RNH1. Dimerization of two such complexes may occur.

Its subcellular location is the lysosome. The protein localises to the cytoplasmic granule. It carries out the reaction an [RNA] containing cytidine + H2O = an [RNA]-3'-cytidine-3'-phosphate + a 5'-hydroxy-ribonucleotide-3'-[RNA].. The catalysed reaction is an [RNA] containing uridine + H2O = an [RNA]-3'-uridine-3'-phosphate + a 5'-hydroxy-ribonucleotide-3'-[RNA].. Its function is as follows. This is a non-secretory ribonuclease. It is a pyrimidine specific nuclease with a slight preference for U. Cytotoxin and helminthotoxin. Possesses a wide variety of biological activities. The chain is Non-secretory ribonuclease (RNASE2) from Macaca fascicularis (Crab-eating macaque).